Consider the following 466-residue polypeptide: Uronate isomerase (466 aa).

It belongs to the metallo-dependent hydrolases superfamily. Uronate isomerase family.

It catalyses the reaction D-glucuronate = D-fructuronate. The catalysed reaction is aldehydo-D-galacturonate = keto-D-tagaturonate. The protein operates within carbohydrate metabolism; pentose and glucuronate interconversion. In Lachnoclostridium phytofermentans (strain ATCC 700394 / DSM 18823 / ISDg) (Clostridium phytofermentans), this protein is Uronate isomerase.